A 154-amino-acid polypeptide reads, in one-letter code: Large ribosomal subunit protein uL30 (154 aa).

Belongs to the universal ribosomal protein uL30 family. Part of the 50S ribosomal subunit.

In Methanoregula boonei (strain DSM 21154 / JCM 14090 / 6A8), this protein is Large ribosomal subunit protein uL30.